Consider the following 488-residue polypeptide: Mannitol 2-dehydrogenase (488 aa).

Position 37–48 (37–48) interacts with NAD(+); that stretch reads IVHVGVGGFHRA.

Belongs to the mannitol dehydrogenase family. Monomer.

The catalysed reaction is D-mannitol + NAD(+) = D-fructose + NADH + H(+). Catalyzes the NAD(H)-dependent interconversion of D-fructose and D-mannitol in the mannitol metabolic pathway. This Aspergillus niger (strain ATCC MYA-4892 / CBS 513.88 / FGSC A1513) protein is Mannitol 2-dehydrogenase.